The following is a 503-amino-acid chain: Anthranilate synthase component 1 3 (503 aa).

An L-tryptophan-binding site is contributed by 269–271 (PYS). A chorismate-binding site is contributed by 304–305 (GT). E331 provides a ligand contact to Mg(2+). Residues Y419, R439, 453–455 (GSG), and G455 each bind chorismate. E468 contributes to the Mg(2+) binding site.

The protein belongs to the anthranilate synthase component I family. In terms of assembly, tetramer of two components I and two components II. The cofactor is Mg(2+).

It catalyses the reaction chorismate + L-glutamine = anthranilate + pyruvate + L-glutamate + H(+). The protein operates within amino-acid biosynthesis; L-tryptophan biosynthesis; L-tryptophan from chorismate: step 1/5. The polypeptide is Anthranilate synthase component 1 3 (trpE3) (Haloarcula marismortui (strain ATCC 43049 / DSM 3752 / JCM 8966 / VKM B-1809) (Halobacterium marismortui)).